The following is a 1050-amino-acid chain: MDAAGRGCHLLPLPAARGPARAPAASSALSPTGLCSGTTSASFAAAGAVAMNPSSSAGEERGATGGSSSSGSGAGSCCLGAEGGADPRGAGAAAAAALEEPAAAGQKEKEEALEEKLRDLTFRKQVSYRKAISRTGLQHLAPAHPLGLPVANGPAKEPRATLDWSENAVNGEHLWLETNVSGDLCYLGEENCQVRFAKSALRRKCAVCKIVVHTACIEQLEKINFRCKPTFREGGSRSPRENFVRHHWVHRRRQEGKCKQCGKGFQQKFSFHSKEIVAISCSWCKQAFHNKVTCFMLHHIEEPCSLGAHAAVIVPPTWIIKVKKPQNSLKASNRKKKRTSFKRKASKRGTEQETKGRPFVIKPISSPLMKPLLVFVNPKSGGNQGTKVLQMFMWYLNPRQVFDLSQEGPKDALEMYRKVPNLRILACGGDGTVGWILSILDELQLSPQPPVGVLPLGTGNDLARTLNWGGGYTDEPVSKILCQVEDGTIVQLDRWNLHVERNPDLPPEELEDGVCKLPLNVFNNYFSLGFDAHVTLEFHESREANPEKFNSRFRNKMFYAGAAFSDFLQRSSRDLSKHVKVVCDGTDLTPKIQDLKFQCIVFLNIPRYCAGTMPWGNPGDHHDFEPQRHDDGYIEVIGFTMASLAALQVGGHGERLHQCREVMLLTYKSIPMQVDGEPCRLAPAMIRISLRNQANMVQKSKRRTSMPLLNDPQSVPDRLRIRVNKISLQDYEGLHYDKDKLREASIPLGILVVRGDCDLETCRMYIDRLQEDLQSVSSGSQRVHYQDQETSFPRALSAQRLSPRWCFLDATSADRFYRIDRSQEHLHFVMEISHDEIFILDPDMVVSQQAGTPPGMPDLVVEQASGLSDWWNPALRKRMLSDSGMITPHYEDSDLKDFSHSRVLQSPVSSEDHAILQAVLTGDLMKLMESYKNGGSLLIQGPGHCSLLHYAAKTGNGDIVKYILDHGPAELLDMADSETGETALHKAACQRNRAVCQLLVDAGASLRQTDSKGKTPQERAQQAGDPDLAAYLESRQNYKIIGHEDLETAV.

Disordered regions lie at residues 53-74 (PSSS…GSGA), 92-111 (AAAA…EKEE), and 328-356 (SLKA…ETKG). Low complexity predominate over residues 92–105 (AAAAAALEEPAAAG). A compositionally biased stretch (basic residues) spans 332 to 347 (SNRKKKRTSFKRKASK). In terms of domain architecture, DAGKc spans 367–502 (PLMKPLLVFV…DRWNLHVERN (136 aa)). ANK repeat units follow at residues 943–972 (GHCS…AELL) and 979–1008 (TGET…SLRQ). A PDZ-binding motif is present at residues 1048 to 1050 (TAV).

Belongs to the eukaryotic diacylglycerol kinase family. Interacts (via PDZ-binding motif) with DLG4; controls the localization of DGKI to the synapse. Interacts (via PDZ-binding motif) with DLG1. Interacts (via PDZ-binding motif) with DLG2. Interacts (via PDZ-binding motif) with DLG3. May interact with RASGRP3; involved in the regulation of RASGRP3 activity. In brain, expressed in the hippocampus and cerebellum with stronger expression in the Purkinje cell layer (at protein level). Expressed in kidney.

It is found in the cell projection. The protein localises to the axon. It localises to the dendrite. The protein resides in the presynapse. Its subcellular location is the postsynapse. It is found in the postsynaptic density. The protein localises to the synaptic cell membrane. It localises to the cytoplasmic vesicle. The protein resides in the secretory vesicle. Its subcellular location is the synaptic vesicle membrane. It is found in the cytoplasm. The protein localises to the cytosol. It localises to the nucleus. The catalysed reaction is a 1,2-diacyl-sn-glycerol + ATP = a 1,2-diacyl-sn-glycero-3-phosphate + ADP + H(+). It carries out the reaction 1,2-di-(9Z-octadecenoyl)-sn-glycerol + ATP = 1,2-di-(9Z-octadecenoyl)-sn-glycero-3-phosphate + ADP + H(+). The enzyme catalyses 1-octadecanoyl-2-(5Z,8Z,11Z,14Z-eicosatetraenoyl)-sn-glycerol + ATP = 1-octadecanoyl-2-(5Z,8Z,11Z,14Z-eicosatetraenoyl)-sn-glycero-3-phosphate + ADP + H(+). It catalyses the reaction 1-octadecanoyl-2-(9Z,12Z)-octadecadienoyl-sn-glycerol + ATP = 1-octadecanoyl-2-(9Z,12Z-octadecadienoyl)-sn-glycero-3-phosphate + ADP + H(+). It functions in the pathway lipid metabolism; glycerolipid metabolism. In terms of biological role, diacylglycerol kinase that converts diacylglycerol/DAG into phosphatidic acid/phosphatidate/PA and regulates the respective levels of these two bioactive lipids. Thereby, acts as a central switch between the signaling pathways activated by these second messengers with different cellular targets and opposite effects in numerous biological processes. Has probably no preference for any of the diacylglycerols in terms of the acyl chain composition, especially for the acyl chain at the sn-2 position. By controlling the diacylglycerol/DAG-mediated activation of RASGRP3, negatively regulates the Rap1 signaling pathway. May play a role in presynaptic diacylglycerol/DAG signaling and control neurotransmitter release during metabotropic glutamate receptor-dependent long-term depression. In Mus musculus (Mouse), this protein is Diacylglycerol kinase iota.